We begin with the raw amino-acid sequence, 569 residues long: Arylsulfatase I (569 aa).

Residues 1-23 (MHTLTGFSLVSLLSFGYLSWDWA) form the signal peptide. Residues D55, D56, and C93 each contribute to the Ca(2+) site. The active-site Nucleophile is the C93. C93 carries the post-translational modification 3-oxoalanine (Cys). K147 contacts substrate. The active site involves H149. Residue H239 coordinates substrate. Residues N276 and N288 are each glycosylated (N-linked (GlcNAc...) asparagine). The Ca(2+) site is built by D297 and N298. K315 contributes to the substrate binding site. Residues N466 and N496 are each glycosylated (N-linked (GlcNAc...) asparagine). Residues 510-539 (RAHPDFNGGAWGPWASDEEEEEEEGRARSF) are disordered.

This sequence belongs to the sulfatase family. The cofactor is Ca(2+). In terms of processing, the oxidation of Cys-93 residue to 3-oxoalanine (also known as C(alpha)-formylglycine) by SUMF1/Sulfatase-modifying factor 1, seems critical for catalytic activity. Expressed in placenta, in embryonic stem cells, fetal eyes and lens.

The protein resides in the secreted. It is found in the endoplasmic reticulum. In terms of biological role, displays arylsulfatase activity at neutral pH, when co-expressed with SUMF1; arylsulfatase activity is measured in the secretion medium of retinal cell line, but no activity is recorded when measured in cell extracts. Lacks arylsulfatase activity. In Homo sapiens (Human), this protein is Arylsulfatase I (ARSI).